We begin with the raw amino-acid sequence, 170 residues long: Inner membrane protein p22 (170 aa).

The Intravirion segment spans residues 1 to 3; the sequence is MST. A helical transmembrane segment spans residues 4 to 24; it reads LLIALIALIVLLIIILVVFLY. Residues 25-170 are Virion surface-facing; that stretch reads YKKQQPPKKV…LYLPRNHKYA (146 aa).

This sequence belongs to the asfivirus inner membrane protein p22 family.

It is found in the virion membrane. Its subcellular location is the host cell membrane. In Ornithodoros (relapsing fever ticks), this protein is Inner membrane protein p22.